Here is a 316-residue protein sequence, read N- to C-terminus: Probable cell division protein WhiA (316 aa).

Residues 277–310 constitute a DNA-binding region (H-T-H motif); it reads SLEQLGRLADPPITKDAIAGRIRRLLQLAEKTEK.

The protein belongs to the WhiA family.

Functionally, involved in cell division and chromosome segregation. In Bifidobacterium adolescentis (strain ATCC 15703 / DSM 20083 / NCTC 11814 / E194a), this protein is Probable cell division protein WhiA.